The following is a 303-amino-acid chain: Polyisoprenyl-teichoic acid--peptidoglycan teichoic acid transferase TagU (303 aa).

Over 1 to 4 (MKKK) the chain is Cytoplasmic. A helical; Signal-anchor for type II membrane protein transmembrane segment spans residues 5–25 (ILFWVLGILGVLIIGGGIYAY). The Extracellular portion of the chain corresponds to 26-303 (NVYSSVSNTL…KLRTHLEVTK (278 aa)).

The protein belongs to the LytR/CpsA/Psr (LCP) family.

The protein resides in the cell membrane. It participates in cell wall biogenesis. Its function is as follows. May catalyze the final step in cell wall teichoic acid biosynthesis, the transfer of the anionic cell wall polymers (APs) from their lipid-linked precursor to the cell wall peptidoglycan (PG). This is Polyisoprenyl-teichoic acid--peptidoglycan teichoic acid transferase TagU from Bacillus cereus (strain ZK / E33L).